We begin with the raw amino-acid sequence, 391 residues long: Ribonucleoside-diphosphate reductase small chain (391 aa).

Positions 135, 166, and 169 each coordinate Fe cation. The active site involves Y173. Fe cation is bound by residues E229, E263, and H266.

This sequence belongs to the ribonucleoside diphosphate reductase small chain family. Heterodimer of a large and a small subunit. Fe cation is required as a cofactor.

The protein resides in the nucleus. Its subcellular location is the cytoplasm. The catalysed reaction is a 2'-deoxyribonucleoside 5'-diphosphate + [thioredoxin]-disulfide + H2O = a ribonucleoside 5'-diphosphate + [thioredoxin]-dithiol. In terms of biological role, provides the precursors necessary for DNA synthesis. Catalyzes the biosynthesis of deoxyribonucleotides from the corresponding ribonucleotides. This chain is Ribonucleoside-diphosphate reductase small chain (suc22), found in Schizosaccharomyces pombe (strain 972 / ATCC 24843) (Fission yeast).